We begin with the raw amino-acid sequence, 381 residues long: Homoserine O-succinyltransferase (381 aa).

The AB hydrolase-1 domain maps to N45–D360. The active-site Nucleophile is S151. R221 serves as a coordination point for substrate. Active-site residues include D321 and H354. Position 355 (D355) interacts with substrate.

This sequence belongs to the AB hydrolase superfamily. MetX family. Homodimer.

The protein resides in the cytoplasm. It catalyses the reaction L-homoserine + succinyl-CoA = O-succinyl-L-homoserine + CoA. The protein operates within amino-acid biosynthesis; L-methionine biosynthesis via de novo pathway; O-succinyl-L-homoserine from L-homoserine: step 1/1. Functionally, transfers a succinyl group from succinyl-CoA to L-homoserine, forming succinyl-L-homoserine. This chain is Homoserine O-succinyltransferase, found in Burkholderia vietnamiensis (strain G4 / LMG 22486) (Burkholderia cepacia (strain R1808)).